A 689-amino-acid chain; its full sequence is Small ribosomal subunit protein mS39 (689 aa).

The N-terminal 37 residues, Met-1–Tyr-37, are a transit peptide targeting the mitochondrion. An N6-acetyllysine modification is found at Lys-126. PPR repeat units lie at residues Ile-149–Val-183, Ser-184–Glu-219, Asn-255–Ala-289, Asp-290–Pro-330, Asn-331–Pro-367, Ser-368–Asp-409, Asp-412–Lys-446, Arg-454–Pro-488, His-489–Phe-523, and Pro-572–Pro-606. A disordered region spans residues Asn-665–Lys-689. Acidic residues predominate over residues Ser-673 to Lys-689.

The protein belongs to the mitochondrion-specific ribosomal protein mS39 family. Component of the mitochondrial small ribosomal subunit (mt-SSU). Mature mammalian 55S mitochondrial ribosomes consist of a small (28S) and a large (39S) subunit. The 28S small subunit contains a 12S ribosomal RNA (12S mt-rRNA) and 30 different proteins. The 39S large subunit contains a 16S rRNA (16S mt-rRNA), a copy of mitochondrial valine transfer RNA (mt-tRNA(Val)), which plays an integral structural role, and 52 different proteins. Associated with the 12S mitochondrial rRNA (12S mt-rRNA). As to expression, abundant in testes, skeletal muscle and heart tissue.

Its subcellular location is the mitochondrion. Its function is as follows. Mitochondrial RNA-binding protein that has a role in mitochondrial translation. The polypeptide is Small ribosomal subunit protein mS39 (PTCD3) (Homo sapiens (Human)).